The chain runs to 93 residues: Large ribosomal subunit protein uL23cz/uL23cy (93 aa).

The protein belongs to the universal ribosomal protein uL23 family. As to quaternary structure, part of the 50S ribosomal subunit.

It is found in the plastid. It localises to the chloroplast. Functionally, binds to 23S rRNA. This Platanus occidentalis (Sycamore) protein is Large ribosomal subunit protein uL23cz/uL23cy (rpl23-A).